The sequence spans 86 residues: Co-chaperonin GroES (86 aa).

This sequence belongs to the GroES chaperonin family. In terms of assembly, heptamer of 7 subunits arranged in a ring. Interacts with the chaperonin GroEL.

The protein resides in the cytoplasm. Together with the chaperonin GroEL, plays an essential role in assisting protein folding. The GroEL-GroES system forms a nano-cage that allows encapsulation of the non-native substrate proteins and provides a physical environment optimized to promote and accelerate protein folding. GroES binds to the apical surface of the GroEL ring, thereby capping the opening of the GroEL channel. In Sulfurovum sp. (strain NBC37-1), this protein is Co-chaperonin GroES.